The sequence spans 499 residues: MAAPEPAPRRGREREREDESEDESDILEESPCGRWQKRREQVNQGNMPGIQSTFLAMDTEEGVEVVWNELHFGDRKAFAAHEEKIQTMFEQLALVDHPNIVKLHKYWLDASEARARVIFITEYVSSGSLKQFLKKTKKNHKAMNARAWKRWCTQILSALSFLHACSPPIIHGNLTSDTIFIQHNGLIKIGSVWYRIFSNALPDDLRSPIRAEREELRNLHFFPPEYGEVNDGTAVDIFSFGMCALEMAVLEIQANGDTRVTEEAIARARHSLSDPNMREFILSCLARDPARRPSAHNLLFHRVLFEVHSLKLLAAHCFIQHQYLMPENVVEEKTKAMDLHAVLAEMPQPHGPPMQWRYSEVSFLELDKFLEDVRNGIYPLMNFAAARPLGLPRVLAPPPEEAQKAKTPTPEPFDSETRKVVQMQCNLERSEDKARWHLTLLLVLEDRLHRQLTYDLLPTDSAQDLAAELVHYGFLHEDDRTKLAAFLETTFLKYRGTQA.

The interval 1–31 (MAAPEPAPRRGREREREDESEDESDILEESP) is disordered. Basic and acidic residues predominate over residues 7 to 17 (APRRGRERERE). The segment covering 18-28 (DESEDESDILE) has biased composition (acidic residues). The region spanning 36 to 304 (QKRREQVNQG…AHNLLFHRVL (269 aa)) is the Protein kinase domain. A disordered region spans residues 396 to 416 (APPPEEAQKAKTPTPEPFDSE). Phosphothreonine is present on residues Thr407 and Thr409.

This sequence belongs to the protein kinase superfamily. Ser/Thr protein kinase family. In terms of tissue distribution, expressed in Purkinje cells of the cerebellum and neurons in the CA3 region of the hippocampus. Also detected in non-neural tissues including mesenchymal layer adjacent to epithelium in developing bronchi of the lung, the epithelium of the stomach as well as cells in the liver.

Its subcellular location is the cytoplasm. In terms of biological role, may regulate apoptosis of neural progenitor cells during their differentiation. The protein is Nuclear receptor-binding protein 2 of Mus musculus (Mouse).